A 360-amino-acid chain; its full sequence is Cyclin-D1-binding protein 1 (360 aa).

Alanine 2 is modified (N-acetylalanine). Interaction with TCF3 stretches follow at residues 2-184 and 150-360; these read ASAT…VDFV and ISYN…ELEL. Interaction with RPLP0 stretches follow at residues 2–190 and 240–360; these read ASAT…AHEE and LIIP…ELEL. The interval 2-208 is required for interaction with CCND1; the sequence is ASATAPAAAV…DPYSGLLNDT (207 aa).

Belongs to the CCNDBP1 family. Interacts with CCND1 and GRAP2. May also interact with COPS5, RPLP0, SIRT6, SYF2 and TCF3. Post-translationally, phosphorylated. As to expression, ubiquitously expressed. Expression is down-regulated in a variety of tumor types including breast, colon, prostate and rectal tumors, and is up-regulated in certain hepatic carcinomas.

It localises to the cytoplasm. It is found in the nucleus. In terms of biological role, may negatively regulate cell cycle progression. May act at least in part via inhibition of the cyclin-D1/CDK4 complex, thereby preventing phosphorylation of RB1 and blocking E2F-dependent transcription. This chain is Cyclin-D1-binding protein 1 (CCNDBP1), found in Homo sapiens (Human).